A 139-amino-acid chain; its full sequence is Large ribosomal subunit protein uL16 (139 aa).

The segment covering 1 to 17 (MLIPRKVKHRKQHHPGR) has biased composition (basic residues). The tract at residues 1 to 24 (MLIPRKVKHRKQHHPGRTGHATGG) is disordered.

This sequence belongs to the universal ribosomal protein uL16 family. As to quaternary structure, part of the 50S ribosomal subunit.

Its function is as follows. Binds 23S rRNA and is also seen to make contacts with the A and possibly P site tRNAs. The sequence is that of Large ribosomal subunit protein uL16 from Clavibacter michiganensis subsp. michiganensis (strain NCPPB 382).